Consider the following 73-residue polypeptide: Antitoxin VapB2 (73 aa).

As to quaternary structure, forms a homodimer, which binds to a toxin homodimer, which then oligomerizes further to a hetero-octamer. When bound to toxin VapC2 the toxin activity is inhibited; 1 antitoxin may suffice to inhibit toxin.

Its function is as follows. Antitoxin component of a type II toxin-antitoxin (TA) system. Upon expression in M.smegmatis neutralizes the effect of cognate toxin VapC2. The C-terminal helix of the antitoxin may obstruct the toxin's RNA-binding groove, blocking access to the active sites. Additionally, the C-terminal arginine of the antitoxin may remove Mg(2+) ions from the toxin active sites. This is Antitoxin VapB2 (vapB2) from Mycobacterium tuberculosis (strain ATCC 25618 / H37Rv).